The chain runs to 290 residues: Shikimate dehydrogenase (NADP(+)) (290 aa).

Shikimate is bound by residues 22–24 (SLS) and Thr-68. Lys-72 serves as the catalytic Proton acceptor. Asp-84 provides a ligand contact to NADP(+). Shikimate contacts are provided by Asn-93 and Asp-108. NADP(+) contacts are provided by residues 133–137 (GSGGS) and Ile-228. Tyr-230 is a shikimate binding site. Gly-251 lines the NADP(+) pocket.

Belongs to the shikimate dehydrogenase family. As to quaternary structure, homodimer.

It carries out the reaction shikimate + NADP(+) = 3-dehydroshikimate + NADPH + H(+). Its pathway is metabolic intermediate biosynthesis; chorismate biosynthesis; chorismate from D-erythrose 4-phosphate and phosphoenolpyruvate: step 4/7. Involved in the biosynthesis of the chorismate, which leads to the biosynthesis of aromatic amino acids. Catalyzes the reversible NADPH linked reduction of 3-dehydroshikimate (DHSA) to yield shikimate (SA). The protein is Shikimate dehydrogenase (NADP(+)) of Leptospira interrogans serogroup Icterohaemorrhagiae serovar Lai (strain 56601).